Here is a 238-residue protein sequence, read N- to C-terminus: Ribitol-5-phosphate cytidylyltransferase (238 aa).

CTP is bound by residues 7–10 (LAGG) and 81–87 (GSDRNET).

The protein belongs to the IspD/TarI cytidylyltransferase family. TarI subfamily.

It carries out the reaction D-ribitol 5-phosphate + CTP + H(+) = CDP-L-ribitol + diphosphate. Its pathway is cell wall biogenesis; poly(ribitol phosphate) teichoic acid biosynthesis. In terms of biological role, catalyzes the transfer of the cytidylyl group of CTP to D-ribitol 5-phosphate. This chain is Ribitol-5-phosphate cytidylyltransferase, found in Staphylococcus saprophyticus subsp. saprophyticus (strain ATCC 15305 / DSM 20229 / NCIMB 8711 / NCTC 7292 / S-41).